Here is a 92-residue protein sequence, read N- to C-terminus: Small ribosomal subunit protein uS19 (92 aa).

This sequence belongs to the universal ribosomal protein uS19 family.

In terms of biological role, protein S19 forms a complex with S13 that binds strongly to the 16S ribosomal RNA. This is Small ribosomal subunit protein uS19 from Staphylococcus epidermidis (strain ATCC 35984 / DSM 28319 / BCRC 17069 / CCUG 31568 / BM 3577 / RP62A).